The primary structure comprises 92 residues: Cell division topological specificity factor (92 aa).

It belongs to the MinE family.

In terms of biological role, prevents the cell division inhibition by proteins MinC and MinD at internal division sites while permitting inhibition at polar sites. This ensures cell division at the proper site by restricting the formation of a division septum at the midpoint of the long axis of the cell. In Syntrophobacter fumaroxidans (strain DSM 10017 / MPOB), this protein is Cell division topological specificity factor.